Reading from the N-terminus, the 281-residue chain is Type VI secretion system accessory component TagJ (281 aa).

In terms of assembly, interacts with TssB1 (via N-terminus). Interacts with ClpV1.

In terms of biological role, component of the H1 type VI (H1-T6SS) secretion system that plays a role in the release of toxins targeting both eukaryotic and prokaryotic species. Forms a stable complex with TssB1. This complex, although not crucial for the H1-T6SS function, may fine-tune the assembly of the system. Plays a role in the interaction between ClpV1 and the TssC1/TssB1 sheath. The chain is Type VI secretion system accessory component TagJ from Pseudomonas aeruginosa (strain ATCC 15692 / DSM 22644 / CIP 104116 / JCM 14847 / LMG 12228 / 1C / PRS 101 / PAO1).